The sequence spans 155 residues: Interleukin-2 (155 aa).

The signal sequence occupies residues 1–20; sequence MYKIQLLSCIALTLALVANG. Thr-23 carries O-linked (GalNAc...) threonine glycosylation. Cys-79 and Cys-127 are oxidised to a cystine.

The protein belongs to the IL-2 family.

The protein localises to the secreted. Its function is as follows. Cytokine produced by activated CD4-positive helper T-cells and to a lesser extend activated CD8-positive T-cells and natural killer (NK) cells that plays pivotal roles in the immune response and tolerance. Binds to a receptor complex composed of either the high-affinity trimeric IL-2R (IL2RA/CD25, IL2RB/CD122 and IL2RG/CD132) or the low-affinity dimeric IL-2R (IL2RB and IL2RG). Interaction with the receptor leads to oligomerization and conformation changes in the IL-2R subunits resulting in downstream signaling starting with phosphorylation of JAK1 and JAK3. In turn, JAK1 and JAK3 phosphorylate the receptor to form a docking site leading to the phosphorylation of several substrates including STAT5. This process leads to activation of several pathways including STAT, phosphoinositide-3-kinase/PI3K and mitogen-activated protein kinase/MAPK pathways. Functions as a T-cell growth factor and can increase NK-cell cytolytic activity as well. Promotes strong proliferation of activated B-cells and subsequently immunoglobulin production. Plays a pivotal role in regulating the adaptive immune system by controlling the survival and proliferation of regulatory T-cells, which are required for the maintenance of immune tolerance. Moreover, participates in the differentiation and homeostasis of effector T-cell subsets, including Th1, Th2, Th17 as well as memory CD8-positive T-cells. This Boselaphus tragocamelus (Nilgai) protein is Interleukin-2 (IL2).